The chain runs to 225 residues: Ribonuclease 3 (225 aa).

Positions 5–127 constitute an RNase III domain; it reads IEKLTRQLGY…IIGAVYLDSD (123 aa). Glu-40 lines the Mg(2+) pocket. Residue Asp-44 is part of the active site. Residues Asp-113 and Glu-116 each coordinate Mg(2+). Residue Glu-116 is part of the active site. The DRBM domain maps to 154–224; sequence DPKTRLQEFL…AELALEQLTN (71 aa).

This sequence belongs to the ribonuclease III family. As to quaternary structure, homodimer. Mg(2+) serves as cofactor.

It is found in the cytoplasm. The enzyme catalyses Endonucleolytic cleavage to 5'-phosphomonoester.. Digests double-stranded RNA. Involved in the processing of primary rRNA transcript to yield the immediate precursors to the large and small rRNAs (23S and 16S). Processes some mRNAs, and tRNAs when they are encoded in the rRNA operon. Processes pre-crRNA and tracrRNA of type II CRISPR loci if present in the organism. In Vibrio vulnificus (strain YJ016), this protein is Ribonuclease 3.